Here is a 147-residue protein sequence, read N- to C-terminus: Signal peptidase complex subunit 3 (147 aa).

Topologically, residues 1 to 6 are cytoplasmic; it reads MHSWVQ. A helical; Signal-anchor for type II membrane protein transmembrane segment spans residues 7–29; it reads RLLTTATTAALLLLAACCAASAL. Residues 30 to 147 are Lumenal-facing; the sequence is DAFHVPSVQA…EFNLPDSYTS (118 aa).

This sequence belongs to the SPCS3 family. Component of the signal peptidase complex (SPC) composed of a catalytic subunit SEC11 and three accessory subunits SPCS1, SPCS2 and SPCS3. The complex induces a local thinning of the ER membrane which is used to measure the length of the signal peptide (SP) h-region of protein substrates. This ensures the selectivity of the complex towards h-regions shorter than 18-20 amino acids.

Its subcellular location is the endoplasmic reticulum membrane. Functionally, essential component of the signal peptidase complex (SPC) which catalyzes the cleavage of N-terminal signal sequences from nascent proteins as they are translocated into the lumen of the endoplasmic reticulum. Essential for the SPC catalytic activity, possibly by stabilizing and positioning the active center of the complex close to the lumenal surface. The polypeptide is Signal peptidase complex subunit 3 (Oryza sativa subsp. japonica (Rice)).